Here is a 162-residue protein sequence, read N- to C-terminus: N5-carboxyaminoimidazole ribonucleotide mutase (162 aa).

Residues serine 11, aspartate 14, and arginine 41 each contribute to the substrate site.

Belongs to the AIR carboxylase family. Class I subfamily.

It carries out the reaction 5-carboxyamino-1-(5-phospho-D-ribosyl)imidazole + H(+) = 5-amino-1-(5-phospho-D-ribosyl)imidazole-4-carboxylate. It functions in the pathway purine metabolism; IMP biosynthesis via de novo pathway; 5-amino-1-(5-phospho-D-ribosyl)imidazole-4-carboxylate from 5-amino-1-(5-phospho-D-ribosyl)imidazole (N5-CAIR route): step 2/2. Catalyzes the conversion of N5-carboxyaminoimidazole ribonucleotide (N5-CAIR) to 4-carboxy-5-aminoimidazole ribonucleotide (CAIR). The polypeptide is N5-carboxyaminoimidazole ribonucleotide mutase (Bacillus subtilis (strain 168)).